The primary structure comprises 350 residues: Phosphotriesterase-related protein (350 aa).

6 residues coordinate a divalent metal cation: His22, His24, Glu169, His201, His230, and Asp298.

Belongs to the metallo-dependent hydrolases superfamily. Phosphotriesterase family. A divalent metal cation serves as cofactor.

This Drosophila pseudoobscura pseudoobscura (Fruit fly) protein is Phosphotriesterase-related protein.